An 883-amino-acid polypeptide reads, in one-letter code: Putative GTP diphosphokinase RSH1, chloroplastic (883 aa).

The N-terminal 55 residues, 1–55 (MTSASSMSVSVECVNICNLTKGDGNARSDCSALSCAWKAPRALTGFLASTAHPPV), are a transit peptide targeting the chloroplast. The region spanning 172 to 279 (FIIHPVAVAR…VKLADRLHNM (108 aa)) is the HD domain. In terms of domain architecture, TGS spans 562–625 (LGSRVFVFTP…ENAEVVEIVT (64 aa)). Residues 710–726 (QSQDKSRDTTPAPQNGS) are compositionally biased toward polar residues. Residues 710 to 746 (QSQDKSRDTTPAPQNGSVWAPKVNGKHNKAIKNSSSD) form a disordered region. The ACT domain maps to 796 to 867 (WLCVVSMDRK…LVLGVLGWSS (72 aa)).

Belongs to the RelA/SpoT family. In terms of assembly, interacts with RPP5.

The protein resides in the plastid. Its subcellular location is the chloroplast. It catalyses the reaction GTP + ATP = guanosine 3'-diphosphate 5'-triphosphate + AMP. In terms of biological role, may be involved in a rapid plant ppGpp (guanosine 3'-diphosphate 5'-diphosphate)-mediated response to pathogens and other stresses. The sequence is that of Putative GTP diphosphokinase RSH1, chloroplastic (RSH1) from Arabidopsis thaliana (Mouse-ear cress).